The sequence spans 246 residues: tRNA (guanine-N(1)-)-methyltransferase (246 aa).

Residues Gly114 and 134 to 139 (IGDYIL) each bind S-adenosyl-L-methionine.

Belongs to the RNA methyltransferase TrmD family. As to quaternary structure, homodimer.

The protein resides in the cytoplasm. It catalyses the reaction guanosine(37) in tRNA + S-adenosyl-L-methionine = N(1)-methylguanosine(37) in tRNA + S-adenosyl-L-homocysteine + H(+). In terms of biological role, specifically methylates guanosine-37 in various tRNAs. This chain is tRNA (guanine-N(1)-)-methyltransferase, found in Coxiella burnetii (strain RSA 493 / Nine Mile phase I).